We begin with the raw amino-acid sequence, 166 residues long: Putative methyltransferase Rv1506c (166 aa).

This sequence belongs to the methyltransferase superfamily.

In terms of biological role, probably plays a role in host phagosome maturation arrest, as well as a role in the synthesis of acyltrehalose-containing glycolipids. The protein is Putative methyltransferase Rv1506c of Mycobacterium tuberculosis (strain ATCC 25618 / H37Rv).